The chain runs to 230 residues: UPF0758 protein Daud_1467 (230 aa).

The 123-residue stretch at 108–230 (TVRTPEEAAG…FTSLKLEGLF (123 aa)) folds into the MPN domain. His-179, His-181, and Asp-192 together coordinate Zn(2+). The JAMM motif signature appears at 179 to 192 (HNHPSGDPAPSPQD).

This sequence belongs to the UPF0758 family.

This Desulforudis audaxviator (strain MP104C) protein is UPF0758 protein Daud_1467.